We begin with the raw amino-acid sequence, 474 residues long: AAA-ATPase At3g28610 (474 aa).

The signal sequence occupies residues Met1–Pro25. Gly244–Ser251 contributes to the ATP binding site.

The protein belongs to the AAA ATPase family. BCS1 subfamily. The cofactor is Mg(2+).

It carries out the reaction ATP + H2O = ADP + phosphate + H(+). This chain is AAA-ATPase At3g28610, found in Arabidopsis thaliana (Mouse-ear cress).